The sequence spans 430 residues: Histidine--tRNA ligase (430 aa).

The protein belongs to the class-II aminoacyl-tRNA synthetase family. As to quaternary structure, homodimer.

Its subcellular location is the cytoplasm. It carries out the reaction tRNA(His) + L-histidine + ATP = L-histidyl-tRNA(His) + AMP + diphosphate + H(+). This chain is Histidine--tRNA ligase, found in Gloeothece citriformis (strain PCC 7424) (Cyanothece sp. (strain PCC 7424)).